We begin with the raw amino-acid sequence, 191 residues long: Xanthine phosphoribosyltransferase (191 aa).

2 residues coordinate xanthine: Leu20 and Asn27. 128–132 (ANGQA) serves as a coordination point for 5-phospho-alpha-D-ribose 1-diphosphate. Lys156 is a xanthine binding site.

Belongs to the purine/pyrimidine phosphoribosyltransferase family. Xpt subfamily. Homodimer.

The protein localises to the cytoplasm. It catalyses the reaction XMP + diphosphate = xanthine + 5-phospho-alpha-D-ribose 1-diphosphate. Its pathway is purine metabolism; XMP biosynthesis via salvage pathway; XMP from xanthine: step 1/1. Its function is as follows. Converts the preformed base xanthine, a product of nucleic acid breakdown, to xanthosine 5'-monophosphate (XMP), so it can be reused for RNA or DNA synthesis. In Acinetobacter baumannii (strain AB307-0294), this protein is Xanthine phosphoribosyltransferase.